An 894-amino-acid polypeptide reads, in one-letter code: Nitrate reductase [NADPH] (894 aa).

A disordered region spans residues 1–79; sequence MAVKSQLGVT…PEDLKTPDHR (79 aa). The segment covering 7-16 has biased composition (polar residues); the sequence is LGVTYTTKTF. The span at 69-79 shows a compositional bias: basic and acidic residues; that stretch reads LPEDLKTPDHR. Residue C169 participates in Mo-molybdopterin binding. The 76-residue stretch at 535–610 folds into the Cytochrome b5 heme-binding domain; the sequence is VRIISLEELK…MPQYHIGTLN (76 aa). Heme is bound by residues H570 and H593. One can recognise an FAD-binding FR-type domain in the interval 638 to 749; sequence KYWSKAILET…KGPVGKFEYL (112 aa). FAD contacts are provided by residues 692–695, 709–713, 723–725, S773, and T776; these read RAYT, LIKIY, and KMT.

The protein belongs to the nitrate reductase family. In terms of assembly, homodimer. FAD serves as cofactor. It depends on heme as a cofactor. The cofactor is Mo-molybdopterin.

It carries out the reaction nitrite + NADP(+) + H2O = nitrate + NADPH + H(+). Functionally, nitrate reductase is a key enzyme involved in the first step of nitrate assimilation in plants, fungi and bacteria. The sequence is that of Nitrate reductase [NADPH] (NIA) from Beauveria bassiana (White muscardine disease fungus).